Consider the following 475-residue polypeptide: Ribulose bisphosphate carboxylase large chain (475 aa).

The propeptide occupies 1–2 (MA). An N-acetylproline modification is found at Pro3. Lys14 is modified (N6,N6,N6-trimethyllysine). Residues Asn123 and Thr173 each contribute to the substrate site. Lys175 serves as the catalytic Proton acceptor. Lys177 is a substrate binding site. Mg(2+) is bound by residues Lys201, Asp203, and Glu204. At Lys201 the chain carries N6-carboxylysine. Catalysis depends on His294, which acts as the Proton acceptor. Substrate-binding residues include Arg295, His327, and Ser379.

Belongs to the RuBisCO large chain family. Type I subfamily. Heterohexadecamer of 8 large chains and 8 small chains; disulfide-linked. The disulfide link is formed within the large subunit homodimers. The cofactor is Mg(2+). The disulfide bond which can form in the large chain dimeric partners within the hexadecamer appears to be associated with oxidative stress and protein turnover.

The protein localises to the plastid. Its subcellular location is the chloroplast. It catalyses the reaction 2 (2R)-3-phosphoglycerate + 2 H(+) = D-ribulose 1,5-bisphosphate + CO2 + H2O. The enzyme catalyses D-ribulose 1,5-bisphosphate + O2 = 2-phosphoglycolate + (2R)-3-phosphoglycerate + 2 H(+). RuBisCO catalyzes two reactions: the carboxylation of D-ribulose 1,5-bisphosphate, the primary event in carbon dioxide fixation, as well as the oxidative fragmentation of the pentose substrate in the photorespiration process. Both reactions occur simultaneously and in competition at the same active site. The sequence is that of Ribulose bisphosphate carboxylase large chain from Tupiella akineta (Green alga).